Consider the following 336-residue polypeptide: HTH-type transcriptional regulator SyrM (336 aa).

The HTH lysR-type domain maps to 41–98 (IDLNLLVALEALLEYRNVTHAGQHIGRSQPAMSRALGRLRGLFNDDLLVRSSTGLIPT). Residues 58-77 (VTHAGQHIGRSQPAMSRALG) constitute a DNA-binding region (H-T-H motif).

It belongs to the LysR transcriptional regulatory family.

Functionally, acts in trans to stimulate nod gene expression via nodD3 and exo gene expression via SyrA. In Rhizobium etli, this protein is HTH-type transcriptional regulator SyrM (syrM).